The following is a 181-amino-acid chain: Transcriptional repressor NrdR (181 aa).

Residues 3 to 34 fold into a zinc finger; it reads CLFCQHTYTRVIDSRVSEDGATIRRRRECEAC. The ATP-cone domain maps to 49–139; it reads PVIIKKDGGR…VYRSFQDVAD (91 aa).

The protein belongs to the NrdR family. Zn(2+) serves as cofactor.

Its function is as follows. Negatively regulates transcription of bacterial ribonucleotide reductase nrd genes and operons by binding to NrdR-boxes. The chain is Transcriptional repressor NrdR from Xylella fastidiosa (strain 9a5c).